The sequence spans 678 residues: DNA ligase (678 aa).

NAD(+) is bound by residues 34–38, 83–84, and glutamate 114; these read DSEYD and SL. Lysine 116 (N6-AMP-lysine intermediate) is an active-site residue. Arginine 137, glutamate 176, lysine 293, and lysine 317 together coordinate NAD(+). Residues cysteine 411, cysteine 414, cysteine 429, and cysteine 435 each coordinate Zn(2+). In terms of domain architecture, BRCT spans 594–678; that stretch reads PTRQPLNGES…LMAGYGQTLS (85 aa).

It belongs to the NAD-dependent DNA ligase family. LigA subfamily. Requires Mg(2+) as cofactor. The cofactor is Mn(2+).

The enzyme catalyses NAD(+) + (deoxyribonucleotide)n-3'-hydroxyl + 5'-phospho-(deoxyribonucleotide)m = (deoxyribonucleotide)n+m + AMP + beta-nicotinamide D-nucleotide.. Functionally, DNA ligase that catalyzes the formation of phosphodiester linkages between 5'-phosphoryl and 3'-hydroxyl groups in double-stranded DNA using NAD as a coenzyme and as the energy source for the reaction. It is essential for DNA replication and repair of damaged DNA. The protein is DNA ligase of Acinetobacter baumannii (strain AB307-0294).